The primary structure comprises 190 residues: Nucleoside triphosphate pyrophosphatase (190 aa).

Residue D69 is the Proton acceptor of the active site.

The protein belongs to the Maf family. A divalent metal cation is required as a cofactor.

The protein localises to the cytoplasm. It carries out the reaction a ribonucleoside 5'-triphosphate + H2O = a ribonucleoside 5'-phosphate + diphosphate + H(+). It catalyses the reaction a 2'-deoxyribonucleoside 5'-triphosphate + H2O = a 2'-deoxyribonucleoside 5'-phosphate + diphosphate + H(+). Nucleoside triphosphate pyrophosphatase. May have a dual role in cell division arrest and in preventing the incorporation of modified nucleotides into cellular nucleic acids. The sequence is that of Nucleoside triphosphate pyrophosphatase from Helicobacter pylori (strain HPAG1).